Reading from the N-terminus, the 348-residue chain is Probable dual-specificity RNA methyltransferase RlmN (348 aa).

The Proton acceptor role is filled by Glu93. In terms of domain architecture, Radical SAM core spans 99-333 (TEKRLTACLS…VSLRKSRGLD (235 aa)). A disulfide bridge connects residues Cys106 and Cys338. 3 residues coordinate [4Fe-4S] cluster: Cys113, Cys117, and Cys120. S-adenosyl-L-methionine is bound by residues 160–161 (GE), Ser190, 219–221 (SLH), and Asn295. Cys338 serves as the catalytic S-methylcysteine intermediate.

Belongs to the radical SAM superfamily. RlmN family. It depends on [4Fe-4S] cluster as a cofactor.

The protein resides in the cytoplasm. The catalysed reaction is adenosine(2503) in 23S rRNA + 2 reduced [2Fe-2S]-[ferredoxin] + 2 S-adenosyl-L-methionine = 2-methyladenosine(2503) in 23S rRNA + 5'-deoxyadenosine + L-methionine + 2 oxidized [2Fe-2S]-[ferredoxin] + S-adenosyl-L-homocysteine. It catalyses the reaction adenosine(37) in tRNA + 2 reduced [2Fe-2S]-[ferredoxin] + 2 S-adenosyl-L-methionine = 2-methyladenosine(37) in tRNA + 5'-deoxyadenosine + L-methionine + 2 oxidized [2Fe-2S]-[ferredoxin] + S-adenosyl-L-homocysteine. In terms of biological role, specifically methylates position 2 of adenine 2503 in 23S rRNA and position 2 of adenine 37 in tRNAs. The sequence is that of Probable dual-specificity RNA methyltransferase RlmN from Prochlorococcus marinus (strain MIT 9215).